The chain runs to 643 residues: MSRPSTPLLDKAPTPDRLRALPEQDLPQLAEELRTELIDAVSTTGGHLGAGLGVVELTVALHHVFNTPYDRIIWDVGHQAYPHKILTGRRDRIRTLRQAGGLSGFTKRAESEYDPFGAAHSSTSISAGLGMAVASELSGEKRNVIAVIGDGSMSAGMAYEAMNNAGALDARLIVILNDNDMSIAPPTGAMSAYLARLVSGRTYRSVREAAKQVAQKLPKFLQDKARKSEEYARAFFTGGTLFEELGFYYVGPIDGHNLDHLLPVLKNVRDTQKGPVLIHVVTQKGKGYAPAEAAADKYHGVNKFDVITGKQAKPPANAPSYTKIFGTSLIEEARHDDKIVAVTAAMPTGTGLDLFGEAFPKRVFDVGIAEQHAVTFAAGLASEGYKPFCAIYSTFLQRGYDQVVHDVSIQNLPVRFPIDRAGLVGADGPTHAGSFDTGFLAALPGFVVMAASDEAELRHMVRTAAEYDEGPISFRYPRGDGVGVDLPERGSVLEIGKGRIVREGTKVALLSFGTRLQECLAAAEELGATGLSTTVADARFAKPLDHDLIRRLAREHEVLVMVEEGAVGGFGSHVLQFLATDGLLDRGLKVRALTLPDIYQDHGKPDAMYAEAGLDRTGIVRTVFAALHRDELGHEALPTPFRA.

Residues His-78 and 119 to 121 (AHS) each bind thiamine diphosphate. Asp-150 is a binding site for Mg(2+). Residues 151–152 (GS), Asn-179, Tyr-288, and Glu-370 contribute to the thiamine diphosphate site. Asn-179 is a Mg(2+) binding site.

Belongs to the transketolase family. DXPS subfamily. As to quaternary structure, homodimer. It depends on Mg(2+) as a cofactor. The cofactor is thiamine diphosphate.

The catalysed reaction is D-glyceraldehyde 3-phosphate + pyruvate + H(+) = 1-deoxy-D-xylulose 5-phosphate + CO2. It functions in the pathway metabolic intermediate biosynthesis; 1-deoxy-D-xylulose 5-phosphate biosynthesis; 1-deoxy-D-xylulose 5-phosphate from D-glyceraldehyde 3-phosphate and pyruvate: step 1/1. In terms of biological role, catalyzes the acyloin condensation reaction between C atoms 2 and 3 of pyruvate and glyceraldehyde 3-phosphate to yield 1-deoxy-D-xylulose-5-phosphate (DXP). The polypeptide is 1-deoxy-D-xylulose-5-phosphate synthase (Brucella suis (strain ATCC 23445 / NCTC 10510)).